The primary structure comprises 131 residues: MSMSDPIADMLTRIRNAQMVEKVSVTMPSSKVKVAIAQVLKDEGYIDDFAVKAEGAKSELNIALKYYAGRPVIERLERVSKPGLRVYRGRNDIPQVMNGLGVAIVSTPKGVMTDRKARATGVGGEVICYVA.

This sequence belongs to the universal ribosomal protein uS8 family. In terms of assembly, part of the 30S ribosomal subunit. Contacts proteins S5 and S12.

Functionally, one of the primary rRNA binding proteins, it binds directly to 16S rRNA central domain where it helps coordinate assembly of the platform of the 30S subunit. This chain is Small ribosomal subunit protein uS8, found in Paraburkholderia phymatum (strain DSM 17167 / CIP 108236 / LMG 21445 / STM815) (Burkholderia phymatum).